Consider the following 417-residue polypeptide: Serine--tRNA ligase (417 aa).

232–234 (TSE) is a binding site for L-serine. ATP is bound at residue 263 to 265 (RKE). Glu286 provides a ligand contact to L-serine. 350 to 353 (EISS) provides a ligand contact to ATP. An L-serine-binding site is contributed by Ser385.

The protein belongs to the class-II aminoacyl-tRNA synthetase family. Type-1 seryl-tRNA synthetase subfamily. Homodimer. The tRNA molecule binds across the dimer.

It localises to the cytoplasm. It carries out the reaction tRNA(Ser) + L-serine + ATP = L-seryl-tRNA(Ser) + AMP + diphosphate + H(+). The catalysed reaction is tRNA(Sec) + L-serine + ATP = L-seryl-tRNA(Sec) + AMP + diphosphate + H(+). The protein operates within aminoacyl-tRNA biosynthesis; selenocysteinyl-tRNA(Sec) biosynthesis; L-seryl-tRNA(Sec) from L-serine and tRNA(Sec): step 1/1. In terms of biological role, catalyzes the attachment of serine to tRNA(Ser). Is also able to aminoacylate tRNA(Sec) with serine, to form the misacylated tRNA L-seryl-tRNA(Sec), which will be further converted into selenocysteinyl-tRNA(Sec). This is Serine--tRNA ligase from Campylobacter hominis (strain ATCC BAA-381 / DSM 21671 / CCUG 45161 / LMG 19568 / NCTC 13146 / CH001A).